The chain runs to 543 residues: Formin-binding protein 1-like (543 aa).

The F-BAR domain occupies 1 to 263 (MSWGTELWDQ…AAKSVDERRD (263 aa)). Coiled-coil stretches lie at residues 66–258 (FTSC…AKSV) and 334–426 (LEDF…QRSE). In terms of domain architecture, REM-1 spans 339-416 (HLPPEQRRKR…IHKNEGWLSE (78 aa)). The interval 424 to 467 (RSERRHSAEANHLVAQGRESPEGSYTEDANQEGRVQPQHHAHPE) is disordered. In terms of domain architecture, SH3 spans 479–540 (PAIGHCKSLY…PTSYIEITLE (62 aa)).

The protein belongs to the FNBP1 family. In terms of assembly, homodimerizes, the dimers can polymerize end-to-end to form filamentous structures. Interacts with GTP-bound cdc42 and wasl/n-wasp.

It is found in the cytoplasm. The protein localises to the cytoskeleton. It localises to the cell cortex. The protein resides in the cytoplasmic vesicle. Its subcellular location is the cell membrane. In terms of biological role, required to coordinate membrane tubulation with reorganization of the actin cytoskeleton during endocytosis. Essential for autophagy of intracellular bacterial pathogens. Promotes cdc42-induced actin polymerization by activating the wasl-waspip complex, the predominant form of wasl/n-wasp in cells. The sequence is that of Formin-binding protein 1-like (fnbp1l) from Xenopus laevis (African clawed frog).